The sequence spans 202 residues: Translation initiation factor IF-3 (202 aa).

The tract at residues 178–202 (TPRKTPLLKKESETTEPKKALRSIN) is disordered. The span at 185 to 196 (LKKESETTEPKK) shows a compositional bias: basic and acidic residues.

The protein belongs to the IF-3 family. Monomer.

It is found in the cytoplasm. In terms of biological role, IF-3 binds to the 30S ribosomal subunit and shifts the equilibrium between 70S ribosomes and their 50S and 30S subunits in favor of the free subunits, thus enhancing the availability of 30S subunits on which protein synthesis initiation begins. In Prochlorococcus marinus (strain NATL1A), this protein is Translation initiation factor IF-3.